The primary structure comprises 279 residues: MKVISSIQELRDQLRGQNRTAFVPTMGNLHEGHLSLMRLARQHGDPVVASIFVNRLQFGPNEDFDKYPRTLQEDIEKLQKENVYVLFAPTERDMYPEPQEYRVQPPHDLGDILEGEFRPGFFTGVCTVVTKLMACVQPRVAVFGKKDYQQLMIVRRMCQQLALPVEIVAAETVRDADGLALSSRNRYLSEAERAEAPELAKTLARVRDAVLDGERDLAAIERRAVAHLSARGWQPDYVSIRRRENLVAPSAAQIEAGDPLVVLTAAKLGATRLIDNLEI.

Position 26–33 (26–33) interacts with ATP; that stretch reads MGNLHEGH. The Proton donor role is filled by His-33. Gln-57 contacts (R)-pantoate. Residue Gln-57 participates in beta-alanine binding. Residue 144–147 participates in ATP binding; it reads GKKD. (R)-pantoate is bound at residue Gln-150. ATP-binding positions include Val-173 and 181 to 184; that span reads LSSR.

The protein belongs to the pantothenate synthetase family. As to quaternary structure, homodimer.

Its subcellular location is the cytoplasm. It catalyses the reaction (R)-pantoate + beta-alanine + ATP = (R)-pantothenate + AMP + diphosphate + H(+). It participates in cofactor biosynthesis; (R)-pantothenate biosynthesis; (R)-pantothenate from (R)-pantoate and beta-alanine: step 1/1. Its function is as follows. Catalyzes the condensation of pantoate with beta-alanine in an ATP-dependent reaction via a pantoyl-adenylate intermediate. This chain is Pantothenate synthetase, found in Burkholderia thailandensis (strain ATCC 700388 / DSM 13276 / CCUG 48851 / CIP 106301 / E264).